Consider the following 249-residue polypeptide: Carbohydrate deacetylase (249 aa).

Mg(2+) is bound by residues His60 and His125.

The protein belongs to the YdjC deacetylase family. As to quaternary structure, homodimer. It depends on Mg(2+) as a cofactor.

In terms of biological role, probably catalyzes the deacetylation of acetylated carbohydrates an important step in the degradation of oligosaccharides. This is Carbohydrate deacetylase from Thermoanaerobacter pseudethanolicus (strain ATCC 33223 / 39E) (Clostridium thermohydrosulfuricum).